Reading from the N-terminus, the 469-residue chain is Adenosylhomocysteinase (469 aa).

3 residues coordinate substrate: Thr63, Asp139, and Glu164. 165-167 (TTT) provides a ligand contact to NAD(+). The substrate site is built by Lys194 and Asp198. NAD(+) contacts are provided by residues Asn199, 228 to 233 (GYGDVG), Glu251, Asn300, 321 to 323 (IGH), and Asn375.

The protein belongs to the adenosylhomocysteinase family. The cofactor is NAD(+).

The protein resides in the cytoplasm. It catalyses the reaction S-adenosyl-L-homocysteine + H2O = L-homocysteine + adenosine. It functions in the pathway amino-acid biosynthesis; L-homocysteine biosynthesis; L-homocysteine from S-adenosyl-L-homocysteine: step 1/1. Its function is as follows. May play a key role in the regulation of the intracellular concentration of adenosylhomocysteine. This is Adenosylhomocysteinase from Pseudomonas entomophila (strain L48).